Reading from the N-terminus, the 391-residue chain is Tryptophan synthase beta chain (391 aa).

Residue Lys-86 is modified to N6-(pyridoxal phosphate)lysine.

It belongs to the TrpB family. As to quaternary structure, tetramer of two alpha and two beta chains. It depends on pyridoxal 5'-phosphate as a cofactor.

The catalysed reaction is (1S,2R)-1-C-(indol-3-yl)glycerol 3-phosphate + L-serine = D-glyceraldehyde 3-phosphate + L-tryptophan + H2O. It functions in the pathway amino-acid biosynthesis; L-tryptophan biosynthesis; L-tryptophan from chorismate: step 5/5. The beta subunit is responsible for the synthesis of L-tryptophan from indole and L-serine. The chain is Tryptophan synthase beta chain from Vibrio metschnikovii.